A 321-amino-acid chain; its full sequence is Acetyl-coenzyme A carboxylase carboxyl transferase subunit beta, chloroplastic (321 aa).

The CoA carboxyltransferase N-terminal domain occupies leucine 47 to leucine 321. 4 residues coordinate Zn(2+): cysteine 51, cysteine 54, cysteine 70, and cysteine 73. The C4-type zinc-finger motif lies at cysteine 51–cysteine 73.

The protein belongs to the AccD/PCCB family. Acetyl-CoA carboxylase is a heterohexamer composed of biotin carboxyl carrier protein, biotin carboxylase and 2 subunits each of ACCase subunit alpha and ACCase plastid-coded subunit beta (accD). Requires Zn(2+) as cofactor.

It localises to the plastid. The protein localises to the chloroplast stroma. The catalysed reaction is N(6)-carboxybiotinyl-L-lysyl-[protein] + acetyl-CoA = N(6)-biotinyl-L-lysyl-[protein] + malonyl-CoA. It participates in lipid metabolism; malonyl-CoA biosynthesis; malonyl-CoA from acetyl-CoA: step 1/1. Functionally, component of the acetyl coenzyme A carboxylase (ACC) complex. Biotin carboxylase (BC) catalyzes the carboxylation of biotin on its carrier protein (BCCP) and then the CO(2) group is transferred by the transcarboxylase to acetyl-CoA to form malonyl-CoA. This chain is Acetyl-coenzyme A carboxylase carboxyl transferase subunit beta, chloroplastic, found in Pinus thunbergii (Japanese black pine).